A 118-amino-acid polypeptide reads, in one-letter code: Large ribosomal subunit protein bL21c (118 aa).

It belongs to the bacterial ribosomal protein bL21 family. In terms of assembly, part of the 50S ribosomal subunit.

The protein localises to the plastid. It is found in the chloroplast. In terms of biological role, this protein binds to 23S rRNA. The sequence is that of Large ribosomal subunit protein bL21c from Psilotum nudum (Whisk fern).